We begin with the raw amino-acid sequence, 248 residues long: Tyrosine recombinase XerD-like (248 aa).

In terms of domain architecture, Core-binding (CB) spans 1-72; sequence MKSYIEPFIA…TANQFLYYLY (72 aa). The region spanning 85 to 248 is the Tyr recombinase domain; the sequence is DTMKVMRTEK…PVTLEKYYKS (164 aa). Catalysis depends on residues K149 and R213. Residue Y245 is the O-(3'-phospho-DNA)-tyrosine intermediate of the active site.

It belongs to the 'phage' integrase family. XerD-like subfamily.

The protein localises to the cytoplasm. In terms of biological role, putative tyrosine recombinase. Not involved in the cutting and rejoining of the recombining DNA molecules on dif(SL) site. The protein is Tyrosine recombinase XerD-like of Streptococcus pyogenes serotype M18 (strain MGAS8232).